The chain runs to 183 residues: Glutathione-regulated potassium-efflux system ancillary protein KefG (183 aa).

Belongs to the NAD(P)H dehydrogenase (quinone) family. KefG subfamily. In terms of assembly, interacts with KefB.

Its subcellular location is the cell inner membrane. It catalyses the reaction a quinone + NADH + H(+) = a quinol + NAD(+). The enzyme catalyses a quinone + NADPH + H(+) = a quinol + NADP(+). Its function is as follows. Regulatory subunit of a potassium efflux system that confers protection against electrophiles. Required for full activity of KefB. This is Glutathione-regulated potassium-efflux system ancillary protein KefG from Salmonella enteritidis PT4 (strain P125109).